The following is a 207-amino-acid chain: MEVHVIDHPLAAARLTALRDERTGNAAFRKALRELTLVLVYEATRAAPTESVAIRTPLAATTGLRLANPPLLVPVLRAGLGMVDEAHAALPEARVGFVGIARNEQTHQPVPYLESLPDDLSGLPVMVLDPMLATGGSMTFTVDLLLSRGATDITVLCVVAAPQGVAALEKAAPNARLFTVAIDDGLNEEAYIVPGLGDAGDRQFGPR.

Residues Arg-77, Arg-102, and 129 to 137 (DPMLATGGS) each bind 5-phospho-alpha-D-ribose 1-diphosphate. Residues Ile-192 and 197–199 (GDA) contribute to the uracil site. Asp-198 is a binding site for 5-phospho-alpha-D-ribose 1-diphosphate.

It belongs to the UPRTase family. Mg(2+) is required as a cofactor.

It carries out the reaction UMP + diphosphate = 5-phospho-alpha-D-ribose 1-diphosphate + uracil. The protein operates within pyrimidine metabolism; UMP biosynthesis via salvage pathway; UMP from uracil: step 1/1. Allosterically activated by GTP. In terms of biological role, catalyzes the conversion of uracil and 5-phospho-alpha-D-ribose 1-diphosphate (PRPP) to UMP and diphosphate. The chain is Uracil phosphoribosyltransferase from Mycobacterium marinum (strain ATCC BAA-535 / M).